The sequence spans 208 residues: MKKFIFCFLCLWTLNIFAASKTYPNKLNRCKITRNIFNDYEPKVFETTNNLLRKTGRLSKFYGERILIKGKILDQNCVPVADAKVYLWQVGSGGKYPYEPLKTRVDKRRFTSKSDSSFTGSGIATTNNKGEYYFISMLPYKSSRYLRSANIRIEHPSLTTLETRLDLSDKNMCDNECGEVNPILIEPQENMPSYCFDLVLQGTTLKRY.

Belongs to the intradiol ring-cleavage dioxygenase family.

The sequence is that of Putative dioxygenase RF_0617 from Rickettsia felis (strain ATCC VR-1525 / URRWXCal2) (Rickettsia azadi).